The following is a 435-amino-acid chain: Probable exopolygalacturonase B (435 aa).

Residues 1–15 (MKFFTAALFASAVSA) form the signal peptide. Residues N59, N184, and N224 are each glycosylated (N-linked (GlcNAc...) asparagine). The active-site Proton donor is the D254. A disulfide bridge connects residues C256 and C273. N-linked (GlcNAc...) asparagine glycans are attached at residues N262 and N274. Residue H277 is part of the active site. N-linked (GlcNAc...) asparagine glycosylation is found at N301, N328, N365, and N368. Residues C391 and C397 are joined by a disulfide bond.

It belongs to the glycosyl hydrolase 28 family.

Its subcellular location is the secreted. It carries out the reaction [(1-&gt;4)-alpha-D-galacturonosyl](n) + H2O = alpha-D-galacturonate + [(1-&gt;4)-alpha-D-galacturonosyl](n-1). In terms of biological role, specific in hydrolyzing the terminal glycosidic bond of polygalacturonic acid and oligogalacturonates. This is Probable exopolygalacturonase B (pgxB) from Aspergillus terreus (strain NIH 2624 / FGSC A1156).